Here is a 502-residue protein sequence, read N- to C-terminus: Xylulose kinase (502 aa).

82–83 (MH) serves as a coordination point for substrate. The Proton acceptor role is filled by Asp240.

It belongs to the FGGY kinase family.

It carries out the reaction D-xylulose + ATP = D-xylulose 5-phosphate + ADP + H(+). Functionally, catalyzes the phosphorylation of D-xylulose to D-xylulose 5-phosphate. The polypeptide is Xylulose kinase (Levilactobacillus brevis (Lactobacillus brevis)).